We begin with the raw amino-acid sequence, 71 residues long: Allergen Art v 2 (71 aa).

Glycosylated. High-mannose oligosaccharides (Man(5-9)GlcNAc(2)).

This Artemisia vulgaris (Mugwort) protein is Allergen Art v 2.